The chain runs to 565 residues: FAD-linked oxidoreductase ZEB1 (565 aa).

The first 27 residues, 1 to 27 (MKLSPSKYLPVLLGTLSLTIANPSADC), serve as a signal peptide directing secretion. Asn46, Asn82, and Asn100 each carry an N-linked (GlcNAc...) asparagine glycan. The region spanning 115–293 (LGNYVSYAIA…ISMTVKAHPG (179 aa)) is the FAD-binding PCMH-type domain. N-linked (GlcNAc...) asparagine glycosylation is found at Asn340, Asn352, and Asn421.

This sequence belongs to the oxygen-dependent FAD-linked oxidoreductase family.

It participates in mycotoxin biosynthesis. Its function is as follows. FAD-linked oxidoreductase; part of the gene cluster that mediates the biosynthesis of zearalenone (ZEA), a nonsteroid estrogen that is a contaminant of cereal grains and causes estrogenic disorders in humans and animals. The ZEA backbone is synthesized from a single acetyl-CoA molecule and eight malonyl-CoA molecules. The reducing polyketide synthase ZEA2 is proposed to synthesize a reduced hexaketide intermediate by using different combinations of its reductive domains during each round of condensation. The hexaketide thioester is then transacylated to the non-reducing polyketide synthase ZEA1 and is further condensed with three malonyl-CoAs without reductive tailoring to yield a mixed reduced/unreduced nonaketide. ZEA1 must be able to interact with ZEA2 to facilitate starter-unit acyltransfer and initiate polyketide biosynthesis. ZEA1 also mediates the required C2-C7 cyclization to form the resorcylate core and catalyzes the formation of the macrolactone. ZEB1 is then responsible for the chemical conversion of beta-zearalenonol (beta-ZOL) to ZEA in the biosynthetic pathway. This is FAD-linked oxidoreductase ZEB1 from Gibberella zeae (strain ATCC MYA-4620 / CBS 123657 / FGSC 9075 / NRRL 31084 / PH-1) (Wheat head blight fungus).